The chain runs to 94 residues: Large ribosomal subunit protein bL27 (94 aa).

A propeptide spanning residues 1-9 is cleaved from the precursor; the sequence is MNLANLQLF. Residues 11-34 form a disordered region; that stretch reads HKKGGGSTSNGRDSQAKRLGAKAA.

This sequence belongs to the bacterial ribosomal protein bL27 family. Post-translationally, the N-terminus is cleaved by ribosomal processing cysteine protease Prp.

In Streptococcus pyogenes serotype M3 (strain ATCC BAA-595 / MGAS315), this protein is Large ribosomal subunit protein bL27.